The following is a 199-amino-acid chain: Charged multivesicular body protein 1b (199 aa).

Residues 26–48 (DKEEKAEKAKIKKAIQKGNMEVA) are a coiled coil. Positions 132 to 156 (MEDTMSSTTTLTTPQGQVDMLLQEM) are interaction with IST1. Positions 167 to 199 (ELPQGQTGSVGTSVASAEQDELSQRLARLRDQV) are disordered. Positions 170 to 182 (QGQTGSVGTSVAS) are enriched in polar residues. The interaction with SPAST stretch occupies residues 174–199 (GSVGTSVASAEQDELSQRLARLRDQV). A coiled-coil region spans residues 178-199 (TSVASAEQDELSQRLARLRDQV). Residues 180–196 (VASAEQDELSQRLARLR) are interaction with VPS4A, MITD1 and STAMBP. The interval 180–199 (VASAEQDELSQRLARLRDQV) is interaction with VTA1. The segment at 183–199 (AEQDELSQRLARLRDQV) is interaction with VPS4B. The MIT-interacting motif motif lies at 186–196 (DELSQRLARLR).

The protein belongs to the SNF7 family. Probable peripherally associated component of the endosomal sorting required for transport complex III (ESCRT-III). ESCRT-III components are thought to multimerize to form a flat lattice on the perimeter membrane of the endosome. Several assembly forms of ESCRT-III may exist that interact and act sequentially. Interacts with CHMP1A. Interacts with VTA1; the interaction probably involves the open conformation of CHMP1B. Interacts with CHMP2A. Interacts with VPS4A; the interaction is direct. Interacts with VPS4B; the interaction is direct. Interacts with SPAST (via MIT domain); the interaction is direct. Interacts with IST1. Interacts with MITD1. Interacts with STAMBP.

Its subcellular location is the cytoplasm. It is found in the cytosol. It localises to the endosome. The protein localises to the late endosome membrane. Functionally, probable peripherally associated component of the endosomal sorting required for transport complex III (ESCRT-III) which is involved in multivesicular bodies (MVBs) formation and sorting of endosomal cargo proteins into MVBs. MVBs contain intraluminal vesicles (ILVs) that are generated by invagination and scission from the limiting membrane of the endosome and mostly are delivered to lysosomes enabling degradation of membrane proteins, such as stimulated growth factor receptors, lysosomal enzymes and lipids. The MVB pathway appears to require the sequential function of ESCRT-O, -I,-II and -III complexes. ESCRT-III proteins mostly dissociate from the invaginating membrane before the ILV is released. The ESCRT machinery also functions in topologically equivalent membrane fission events, such as the terminal stages of cytokinesis and the budding of enveloped viruses (lentiviruses). ESCRT-III proteins are believed to mediate the necessary vesicle extrusion and/or membrane fission activities, possibly in conjunction with the AAA ATPase VPS4. Involved in cytokinesis. Involved in recruiting VPS4A and/or VPS4B and SPAST to the midbody of dividing cells. This chain is Charged multivesicular body protein 1b (CHMP1B), found in Bos taurus (Bovine).